The following is a 187-amino-acid chain: MVKTVYVTGYKSFELNIFKDDAPEVHYLKQFIKHKIEQLLDEGLEWVLIQGQMGIELWTAEVVIELQRTYDSLKFAVITPFQGHTEKWNEHNQSKYANIIKHADYVDSIFHTSYQGPFQFKQADQFMLEHSDQTLLIYDEEQEASPKFFKQMLVDFMDKTNYTCDIVTFDELTAFINDLQWSEDQSF.

Belongs to the UPF0398 family.

The protein is UPF0398 protein MW1336 of Staphylococcus aureus (strain MW2).